Consider the following 196-residue polypeptide: Ribonuclease HII (196 aa).

In terms of domain architecture, RNase H type-2 spans 4 to 196; that stretch reads IWVCGVDEAG…PVRRVLEGSF (193 aa). Aspartate 10, glutamate 11, and aspartate 106 together coordinate a divalent metal cation.

The protein belongs to the RNase HII family. Mn(2+) is required as a cofactor. Requires Mg(2+) as cofactor.

The protein resides in the cytoplasm. The catalysed reaction is Endonucleolytic cleavage to 5'-phosphomonoester.. Endonuclease that specifically degrades the RNA of RNA-DNA hybrids. This is Ribonuclease HII from Polynucleobacter asymbioticus (strain DSM 18221 / CIP 109841 / QLW-P1DMWA-1) (Polynucleobacter necessarius subsp. asymbioticus).